The chain runs to 231 residues: Aminodeoxyfutalosine nucleosidase (231 aa).

The active-site Proton acceptor is the glutamate 14. Substrate-binding positions include glycine 81, valine 155, and 175–176; that span reads ME. Aspartate 199 (proton donor) is an active-site residue.

The protein belongs to the PNP/UDP phosphorylase family. Homodimer.

It catalyses the reaction 6-amino-6-deoxyfutalosine + H2O = dehypoxanthine futalosine + adenine. The enzyme catalyses S-adenosyl-L-homocysteine + H2O = S-(5-deoxy-D-ribos-5-yl)-L-homocysteine + adenine. The catalysed reaction is S-methyl-5'-thioadenosine + H2O = 5-(methylsulfanyl)-D-ribose + adenine. It carries out the reaction 5'-deoxyadenosine + H2O = 5-deoxy-D-ribose + adenine. Its pathway is quinol/quinone metabolism; menaquinone biosynthesis. It functions in the pathway amino-acid biosynthesis; L-methionine biosynthesis via salvage pathway; S-methyl-5-thio-alpha-D-ribose 1-phosphate from S-methyl-5'-thioadenosine (hydrolase route): step 1/2. In terms of biological role, catalyzes the direct conversion of aminodeoxyfutalosine (AFL) into dehypoxanthine futalosine (DHFL) and adenine via the hydrolysis of the N-glycosidic bond; this reaction seems to represent an essential step in the menaquinone biosynthesis pathway in Helicobacter species. Can also probably catalyzes the hydrolysis of 5'-methylthioadenosine (MTA) and S-adenosylhomocysteine (SAH) to adenine and the corresponding thioribose, 5'-methylthioribose and S-ribosylhomocysteine, respectively. These other activities highlight the tremendous versatility of the enzyme, which also plays key roles in S-adenosylmethionine recycling and in the biosynthesis of the quorum-sensing molecule autoinducer-2. Does not act on futalosine (FL) as substrate. The protein is Aminodeoxyfutalosine nucleosidase (mtnN) of Helicobacter pylori (strain ATCC 700392 / 26695) (Campylobacter pylori).